The chain runs to 412 residues: Polyferredoxin protein MvhB (412 aa).

12 consecutive 4Fe-4S ferredoxin-type domains span residues 2 to 29 (IIVN…VTPE), 30 to 57 (DVIY…LEDL), 67 to 96 (GRIV…LDEG), 97 to 127 (KVKK…VEGI), 138 to 166 (EGPI…LDKV), 168 to 197 (GVIE…ISGR), 207 to 236 (KKFE…PRTS), 238 to 266 (LTVE…LEVE), 276 to 305 (EGLV…VVTK), 314 to 345 (EKVD…LVDM), 357 to 386 (KRVQ…LTDE), and 385 to 412 (DEKV…LSLK). Cysteine 9, cysteine 12, cysteine 15, and cysteine 19 together coordinate [4Fe-4S] cluster. Residues cysteine 76, cysteine 79, cysteine 82, cysteine 86, cysteine 107, cysteine 110, cysteine 113, cysteine 117, cysteine 146, cysteine 149, cysteine 152, cysteine 156, cysteine 177, cysteine 180, cysteine 183, cysteine 187, cysteine 216, cysteine 219, cysteine 222, cysteine 226, cysteine 246, cysteine 249, cysteine 252, and cysteine 256 each contribute to the [4Fe-4S] cluster site. [4Fe-4S] cluster-binding residues include cysteine 325, cysteine 328, cysteine 331, cysteine 335, cysteine 366, cysteine 369, cysteine 372, cysteine 376, cysteine 394, cysteine 397, cysteine 400, and cysteine 404.

The cofactor is [4Fe-4S] cluster.

The polypeptide is Polyferredoxin protein MvhB (mvhB) (Methanothermobacter thermautotrophicus (strain ATCC 29096 / DSM 1053 / JCM 10044 / NBRC 100330 / Delta H) (Methanobacterium thermoautotrophicum)).